Here is a 472-residue protein sequence, read N- to C-terminus: 3-isopropylmalate dehydratase large subunit (472 aa).

[4Fe-4S] cluster is bound by residues Cys-353, Cys-414, and Cys-417.

This sequence belongs to the aconitase/IPM isomerase family. LeuC type 1 subfamily. Heterodimer of LeuC and LeuD. [4Fe-4S] cluster is required as a cofactor.

It carries out the reaction (2R,3S)-3-isopropylmalate = (2S)-2-isopropylmalate. It participates in amino-acid biosynthesis; L-leucine biosynthesis; L-leucine from 3-methyl-2-oxobutanoate: step 2/4. Functionally, catalyzes the isomerization between 2-isopropylmalate and 3-isopropylmalate, via the formation of 2-isopropylmaleate. This is 3-isopropylmalate dehydratase large subunit from Acinetobacter baumannii (strain AB0057).